The following is a 47-amino-acid chain: Accessory gland peptide Acp33A (47 aa).

An N-terminal signal peptide occupies residues 1–21 (MLPSKRVPFLFTIILFLAGLG).

In terms of tissue distribution, main cells of accessory gland and seminal fluid.

The protein localises to the secreted. Functionally, responsible for physiological and behavioral changes in mated female flies. The protein is Accessory gland peptide Acp33A (Acp33A) of Drosophila melanogaster (Fruit fly).